Here is a 393-residue protein sequence, read N- to C-terminus: Actin-related protein 2 (393 aa).

ATP is bound by residues 158–160 (GDG), 212–216 (RQMKE), and 303–308 (GGTTMY).

This sequence belongs to the actin family. ARP2 subfamily. Component of the Arp2/3 complex.

It localises to the cytoplasm. It is found in the cytoskeleton. Its function is as follows. Functions as ATP-binding component of the Arp2/3 complex which is involved in regulation of actin polymerization and together with an activating nucleation-promoting factor (NPF) mediates the formation of branched actin networks. Seems to contact the pointed end of the daughter actin filament. The polypeptide is Actin-related protein 2 (arx-2) (Caenorhabditis briggsae).